The sequence spans 547 residues: Putative laccase-5 (547 aa).

The first 35 residues, 1 to 35 (MGTPRGLRNAGSSSSACRFLAAFAVLLALPTLTAG), serve as a signal peptide directing secretion. Plastocyanin-like domains lie at 43–159 (NVQM…PKRG) and 170–323 (ELPP…YAPT). N-linked (GlcNAc...) asparagine glycosylation is found at Asn-48 and Asn-89. 4 residues coordinate Cu cation: His-93, His-95, His-138, and His-140. Residues Asn-199, Asn-215, Asn-251, Asn-311, Asn-342, Asn-349, Asn-388, Asn-395, Asn-405, and Asn-430 are each glycosylated (N-linked (GlcNAc...) asparagine). Positions 408–531 (FVRPRVALLE…SMAWLVNDGP (124 aa)) constitute a Plastocyanin-like 3 domain. Cu cation is bound by residues His-448, His-451, His-453, His-510, Cys-511, His-512, and His-516.

This sequence belongs to the multicopper oxidase family. Cu cation is required as a cofactor.

It localises to the secreted. Its subcellular location is the extracellular space. It is found in the apoplast. It carries out the reaction 4 hydroquinone + O2 = 4 benzosemiquinone + 2 H2O. In terms of biological role, lignin degradation and detoxification of lignin-derived products. The protein is Putative laccase-5 (LAC5) of Oryza sativa subsp. japonica (Rice).